We begin with the raw amino-acid sequence, 1285 residues long: Dermonecrotic toxin (1285 aa).

Residues 402–422 traverse the membrane as a helical segment; it reads MLVPAVGIPINFALSATALGL.

Its subcellular location is the cytoplasm. It localises to the secreted. The protein resides in the host membrane. Its function is as follows. This is a dermonecrotic toxin. This osteolytic toxin, induces bone resorption. Potent mitogen. This toxin is associated with the severe progressive form of the atrophic rhinitis, a major respiratory disease in pigs. The sequence is that of Dermonecrotic toxin (toxA) from Pasteurella multocida.